Consider the following 547-residue polypeptide: Chaperonin GroEL (547 aa).

Residues 30–33 (TLGP), Lys51, 87–91 (DGTTT), Gly415, and Asp496 contribute to the ATP site. A disordered region spans residues 528–547 (KGGGAPAGGGMPGGMGDMDF).

This sequence belongs to the chaperonin (HSP60) family. As to quaternary structure, forms a cylinder of 14 subunits composed of two heptameric rings stacked back-to-back. Interacts with the co-chaperonin GroES.

Its subcellular location is the cytoplasm. The enzyme catalyses ATP + H2O + a folded polypeptide = ADP + phosphate + an unfolded polypeptide.. Its function is as follows. Together with its co-chaperonin GroES, plays an essential role in assisting protein folding. The GroEL-GroES system forms a nano-cage that allows encapsulation of the non-native substrate proteins and provides a physical environment optimized to promote and accelerate protein folding. The chain is Chaperonin GroEL from Caulobacter vibrioides (strain ATCC 19089 / CIP 103742 / CB 15) (Caulobacter crescentus).